Here is a 487-residue protein sequence, read N- to C-terminus: MGVIGIQLVVTMVMASVMQKIIPHYSLARWLLCNGSLRWYQHPTEEELRILAGKQQKGKTKKDRKYNGHIESKPLTIPKDIDLHLETKSVTEVDTLALHYFPEYQWLVDFTVAATVVYLVTEVYYNFMKPTQEMNISLVWCLLVLSFAIKVLFSLTTHYFKVEDGGERSVCVTFGFFFFVKAMAVLIVTENYLEFGLETGFTNFSDSAMQFLEKQGLESQSPVSKLTFKFFLAIFCSFIGAFLTFPGLRLAQMHLDALNLATEKITQTLLHINFLAPLFMVLLWVKPITKDYIMNPPLGKESIPLMTEATFDTLRLWLIILLCALRLAMMRSHLQAYLNLAQKCVDQMKKEAGRISTVELQKMVARVFYYLCVIALQYVAPLVMLLHTTLLLKTLGNHSWGIYPESISTLPVDNSLLSNSVYSELPSAEGKMKVTVTQITVALSSLKNIFTPLLFRGLLSFLTWWIAACLFSTSLFGLFYHQYLTVA.

Asparagine 34 carries N-linked (GlcNAc...) asparagine glycosylation. A helical membrane pass occupies residues 107–127; sequence LVDFTVAATVVYLVTEVYYNF. A glycan (N-linked (GlcNAc...) asparagine) is linked at asparagine 135. Transmembrane regions (helical) follow at residues 136–156 and 169–189; these read ISLV…FSLT and SVCV…LIVT. N-linked (GlcNAc...) asparagine glycosylation is present at asparagine 203. A run of 5 helical transmembrane segments spans residues 228–248, 265–285, 305–325, 367–387, and 459–479; these read FKFF…FPGL, ITQT…LLWV, LMTE…LCAL, VFYY…MLLH, and LSFL…FGLF.

It belongs to the TMEM161 family.

The protein localises to the cell membrane. Functionally, essential for maintaining normal cardiac rhythm in the developing heart and for neonatal survival. Inhibits potassium and calcium currents in the cardiomyocytes, this assists in timely action potential repolarization and thereby maintains normal cardiac rhythm. The chain is Transmembrane protein 161B (TMEM161B) from Homo sapiens (Human).